A 139-amino-acid polypeptide reads, in one-letter code: Hydrogenase maturation factor HypA (139 aa).

Histidine 2 lines the Ni(2+) pocket. Cysteine 73, cysteine 76, cysteine 110, and cysteine 113 together coordinate Zn(2+).

The protein belongs to the HypA/HybF family.

In terms of biological role, involved in the maturation of [NiFe] hydrogenases. Required for nickel insertion into the metal center of the hydrogenase. This is Hydrogenase maturation factor HypA from Thermococcus gammatolerans (strain DSM 15229 / JCM 11827 / EJ3).